Reading from the N-terminus, the 279-residue chain is 3-methyl-2-oxobutanoate hydroxymethyltransferase (279 aa).

Residues Asp-43 and Asp-82 each coordinate Mg(2+). 3-methyl-2-oxobutanoate is bound by residues 43-44 (DS), Asp-82, and Lys-112. Glu-114 contacts Mg(2+). Glu-181 serves as the catalytic Proton acceptor.

It belongs to the PanB family. As to quaternary structure, homodecamer; pentamer of dimers. Mg(2+) serves as cofactor.

Its subcellular location is the cytoplasm. The enzyme catalyses 3-methyl-2-oxobutanoate + (6R)-5,10-methylene-5,6,7,8-tetrahydrofolate + H2O = 2-dehydropantoate + (6S)-5,6,7,8-tetrahydrofolate. The protein operates within cofactor biosynthesis; (R)-pantothenate biosynthesis; (R)-pantoate from 3-methyl-2-oxobutanoate: step 1/2. Catalyzes the reversible reaction in which hydroxymethyl group from 5,10-methylenetetrahydrofolate is transferred onto alpha-ketoisovalerate to form ketopantoate. In Halalkalibacterium halodurans (strain ATCC BAA-125 / DSM 18197 / FERM 7344 / JCM 9153 / C-125) (Bacillus halodurans), this protein is 3-methyl-2-oxobutanoate hydroxymethyltransferase.